The primary structure comprises 477 residues: Histone-lysine N-methyltransferase SUV39H2 (477 aa).

Residues 1–59 (MATARAKARGSEAGARCHRAPGPPPRPKARRTARRRRAETLTARRSRPSAGERRAGSQR) form a disordered region. Residues 27–37 (PKARRTARRRR) show a composition bias toward basic residues. Positions 118–176 (YEVEYLCDYKVAKGVEYYLVKWKGWPDSTNTWEPLRNLRCPQLLRQFSDDKKTYLAQER) constitute a Chromo domain. A Pre-SET domain is found at 256–314 (FGCSCTDCFFDKCCPAEAGVVLAYNKKQQIKIQPGTPIYECNSRCRCGPECPNRIVQKG). The Zn(2+) site is built by cysteine 258, cysteine 260, cysteine 263, cysteine 268, cysteine 269, cysteine 296, cysteine 300, cysteine 302, and cysteine 306. Residues 317 to 440 (YSLCIFKTSN…AGEELTFDYQ (124 aa)) enclose the SET domain. Residues 328-330 (CGW), tyrosine 371, and 397-398 (NH) contribute to the S-adenosyl-L-methionine site. Cysteine 400 is a binding site for Zn(2+). Serine 448, serine 451, and serine 455 each carry phosphoserine. The region spanning 461-477 (VRTQCKCGAETCRGYLN) is the Post-SET domain. Residues cysteine 465, cysteine 467, and cysteine 472 each contribute to the Zn(2+) site.

Belongs to the class V-like SAM-binding methyltransferase superfamily. Histone-lysine methyltransferase family. Suvar3-9 subfamily. In terms of assembly, interacts with SMAD5. The large PER complex involved in the histone methylation is composed of at least PER2, CBX3, TRIM28, SUV39H1 and/or SUV39H2; CBX3 mediates the formation of the complex. Post-translationally, ubiquitinated by the DCX(DCAF13) E3 ubiquitin ligase complex, leading to its degradation. In terms of tissue distribution, testis specific; predominant expression in type B spermatogonia and preleptotene spermatocytes.

Its subcellular location is the nucleus. The protein localises to the chromosome. It localises to the centromere. The enzyme catalyses L-lysyl(9)-[histone H3] + 3 S-adenosyl-L-methionine = N(6),N(6),N(6)-trimethyl-L-lysyl(9)-[histone H3] + 3 S-adenosyl-L-homocysteine + 3 H(+). Functionally, histone methyltransferase that specifically trimethylates 'Lys-9' of histone H3 using monomethylated H3 'Lys-9' as substrate. H3 'Lys-9' trimethylation represents a specific tag for epigenetic transcriptional repression by recruiting HP1 (CBX1, CBX3 and/or CBX5) proteins to methylated histones. Mainly functions in heterochromatin regions, thereby playing a central role in the establishment of constitutive heterochromatin at pericentric and telomere regions. H3 'Lys-9' trimethylation is also required to direct DNA methylation at pericentric repeats. SUV39H1 is targeted to histone H3 via its interaction with RB1 and is involved in many processes, such as cell cycle regulation, transcriptional repression and regulation of telomere length. May participate in regulation of higher-order chromatin organization during spermatogenesis. Recruited by the large PER complex to the E-box elements of the circadian target genes such as PER2 itself or PER1, contributes to the conversion of local chromatin to a heterochromatin-like repressive state through H3 'Lys-9' trimethylation. The protein is Histone-lysine N-methyltransferase SUV39H2 (Suv39h2) of Mus musculus (Mouse).